The chain runs to 207 residues: Small ribosomal subunit protein uS4 (207 aa).

The S4 RNA-binding domain maps to 97 to 165 (SRLDNLVFRM…VKLALESKAV (69 aa)).

Belongs to the universal ribosomal protein uS4 family. Part of the 30S ribosomal subunit. Contacts protein S5. The interaction surface between S4 and S5 is involved in control of translational fidelity.

One of the primary rRNA binding proteins, it binds directly to 16S rRNA where it nucleates assembly of the body of the 30S subunit. Its function is as follows. With S5 and S12 plays an important role in translational accuracy. This is Small ribosomal subunit protein uS4 from Mycoplasmoides gallisepticum (strain R(low / passage 15 / clone 2)) (Mycoplasma gallisepticum).